A 392-amino-acid polypeptide reads, in one-letter code: uncharacterized protein (392 aa).

Belongs to the hcp1 family.

This is an uncharacterized protein from Escherichia coli (strain K12).